The primary structure comprises 66 residues: UPF0337 protein SpyM3_1723 (66 aa).

The span at 1–10 shows a compositional bias: basic and acidic residues; that stretch reads MSEEKLKSKI. The interval 1 to 23 is disordered; that stretch reads MSEEKLKSKIEQASGGLKEGAGK.

It belongs to the UPF0337 (CsbD) family.

This Streptococcus pyogenes serotype M3 (strain ATCC BAA-595 / MGAS315) protein is UPF0337 protein SpyM3_1723.